Here is a 475-residue protein sequence, read N- to C-terminus: Pentatricopeptide repeat-containing protein At1g29710, mitochondrial (475 aa).

The N-terminal 37 residues, 1 to 37 (MVRLWCGKLRLWKPYLALATQSRNSWFCSGGGAPSHH), are a transit peptide targeting the mitochondrion. PPR repeat units follow at residues 83-117 (AQNVTIETFDSLCIQGNWREAVEVLDYLENKGYAM), 118-148 (DLIRLLGLAKLCGKPEALEAARVVHECIIAL), 153-183 (DVGARNAIIEMYSGCCSVDDALKVFEEMPEW), 184-218 (NSGTLCVMMRCFVNNGYGEEAIDLFTRFKEEGNKP), 219-254 (NGEIFNQVFSTCTLTGDVKEGSLQFQAMYREYGIVP), and 255-285 (SMEHYHSVTKMLATSGHLDEALNFVERMPME). Positions 350–380 (YFYSTFRPVDSSHPQMNIIYETLMSLRSQLK) are type E(+) motif. The interval 381–475 (EMGYVPDTRY…NGVCRCNNLW (95 aa)) is type DYW motif.

It belongs to the PPR family. PCMP-H subfamily.

It is found in the mitochondrion. The polypeptide is Pentatricopeptide repeat-containing protein At1g29710, mitochondrial (PCMP-H67) (Arabidopsis thaliana (Mouse-ear cress)).